The sequence spans 324 residues: MSGLLQLDEESLYDHIFERYTLLTSNNDSLKQDLGIVDRTVSKITIDIDQFDFNNKKSNNDFYSIEINQPITSLNSSSVNNNSTTGYVVWSTTPFFTRWLIFHSNASIFRNGGSIELIDQDDELKLPPMFSNSVGLLELGSGIAGILPVTLGNFVGSFIATDQIGILSTLKTNILENLSQLNRKIVTSRSLNLNLDVDESTLLKRSLLSLECLPLDWELFDIKDTTKLDPALLSLFKEKETIYVLAMDVIYNEYLIESFLSTIQNLKSLAFKFNVNLNCLIGIQLRSEEVTTLFLEKAIIDYEMKVYYIQDNILESSRFSIYMI.

Residues tryptophan 90, 140-142 (GSG), aspartate 162, tryptophan 217, and methionine 247 each bind S-adenosyl-L-methionine.

Belongs to the class I-like SAM-binding methyltransferase superfamily. RKM5 family.

In terms of biological role, S-adenosyl-L-methionine-dependent protein-lysine N-methyltransferase that methylates 60S ribosomal protein L1. This chain is Ribosomal lysine N-methyltransferase 5 (RKM5), found in Vanderwaltozyma polyspora (strain ATCC 22028 / DSM 70294 / BCRC 21397 / CBS 2163 / NBRC 10782 / NRRL Y-8283 / UCD 57-17) (Kluyveromyces polysporus).